Here is a 527-residue protein sequence, read N- to C-terminus: Amine oxidase [flavin-containing] A (527 aa).

N-acetylmethionine is present on Met1. At 1–497 the chain is on the cytoplasmic side; it reads MASQEKASMA…HSFWERNLPS (497 aa). Ser383 carries the post-translational modification Phosphoserine. Residue Cys406 is modified to S-8alpha-FAD cysteine. Residues 498 to 518 traverse the membrane as a helical; Anchor for type IV membrane protein segment; that stretch reads VGGLLKIIGFSTSITALWIVV. The Mitochondrial intermembrane portion of the chain corresponds to 519-527; it reads YKFKLLTRS. Positions 520-522 are interaction with membrane phospholipid headgroups; the sequence is KFK.

Belongs to the flavin monoamine oxidase family. As to quaternary structure, monomer, homo- or heterodimer (containing two subunits of similar size). Each subunit contains a covalently bound flavin. Enzymatically active as monomer. It depends on FAD as a cofactor.

The protein localises to the mitochondrion outer membrane. The catalysed reaction is a secondary aliphatic amine + O2 + H2O = a primary amine + an aldehyde + H2O2. It catalyses the reaction a primary methyl amine + O2 + H2O = an aldehyde + H2O2 + NH4(+). The enzyme catalyses (R)-adrenaline + O2 + H2O = (R)-3,4-dihydroxymandelaldehyde + methylamine + H2O2. It carries out the reaction dopamine + O2 + H2O = 3,4-dihydroxyphenylacetaldehyde + H2O2 + NH4(+). The catalysed reaction is tyramine + O2 + H2O = (4-hydroxyphenyl)acetaldehyde + H2O2 + NH4(+). It catalyses the reaction (R)-noradrenaline + O2 + H2O = (R)-3,4-dihydroxymandelaldehyde + H2O2 + NH4(+). The enzyme catalyses serotonin + O2 + H2O = (5-hydroxyindol-3-yl)acetaldehyde + H2O2 + NH4(+). It carries out the reaction kynuramine + O2 + H2O = 3-(2-aminophenyl)-3-oxopropanal + H2O2 + NH4(+). The catalysed reaction is tryptamine + O2 + H2O = indole-3-acetaldehyde + H2O2 + NH4(+). It catalyses the reaction 2-phenylethylamine + O2 + H2O = 2-phenylacetaldehyde + H2O2 + NH4(+). In terms of biological role, catalyzes the oxidative deamination of primary and some secondary amine such as neurotransmitters, with concomitant reduction of oxygen to hydrogen peroxide and has important functions in the metabolism of neuroactive and vasoactive amines in the central nervous system and peripheral tissues. Preferentially oxidizes serotonin. Also catalyzes the oxidative deamination of kynuramine to 3-(2-aminophenyl)-3-oxopropanal that can spontaneously condense to 4-hydroxyquinoline. This is Amine oxidase [flavin-containing] A from Equus caballus (Horse).